The primary structure comprises 145 residues: Major pollen allergen Lig v 1 (145 aa).

Intrachain disulfides connect cysteine 19–cysteine 90, cysteine 22–cysteine 131, and cysteine 43–cysteine 78. N-linked (GlcNAc...) asparagine glycosylation is present at asparagine 111.

The protein belongs to the Ole e I family.

The protein resides in the secreted. The sequence is that of Major pollen allergen Lig v 1 from Ligustrum vulgare (Common privet).